We begin with the raw amino-acid sequence, 324 residues long: Phospho-N-acetylmuramoyl-pentapeptide-transferase (324 aa).

Helical transmembrane passes span 5–25, 57–77, 81–101, 117–137, 147–167, 176–196, 203–223, 227–247, 250–270, and 302–322; these read AIVIAMAVSFLITVVLSPLFI, IMILLAIVATTLWITPKIAGL, TYLLLLVTVGYGVLGFLDDMI, FIGQLLIAAIFFAVYRQSGFS, WSVDLGWAYGVLLLFMLVGGS, LDGLLAGTAAIAFGAYAVLAW, VAVFCVAVVGAVLGFLVFNAH, VFMGDTGSLALGGAIAAVAVL, LELLLVIIGGVFVIETLSVII, and IVVTFWAVGLLFAMLGIYIEV.

The protein belongs to the glycosyltransferase 4 family. MraY subfamily. It depends on Mg(2+) as a cofactor.

Its subcellular location is the cell membrane. The catalysed reaction is UDP-N-acetyl-alpha-D-muramoyl-L-alanyl-gamma-D-glutamyl-meso-2,6-diaminopimeloyl-D-alanyl-D-alanine + di-trans,octa-cis-undecaprenyl phosphate = di-trans,octa-cis-undecaprenyl diphospho-N-acetyl-alpha-D-muramoyl-L-alanyl-D-glutamyl-meso-2,6-diaminopimeloyl-D-alanyl-D-alanine + UMP. It participates in cell wall biogenesis; peptidoglycan biosynthesis. Its function is as follows. Catalyzes the initial step of the lipid cycle reactions in the biosynthesis of the cell wall peptidoglycan: transfers peptidoglycan precursor phospho-MurNAc-pentapeptide from UDP-MurNAc-pentapeptide onto the lipid carrier undecaprenyl phosphate, yielding undecaprenyl-pyrophosphoryl-MurNAc-pentapeptide, known as lipid I. The sequence is that of Phospho-N-acetylmuramoyl-pentapeptide-transferase from Geobacillus kaustophilus (strain HTA426).